The sequence spans 359 residues: Ferredoxin--NADP reductase (359 aa).

Positions 48, 56, 61, 101, 139, 304, and 345 each coordinate FAD. Residues 340–359 (VHTHTSNDTNLQSRLHAAAE) form a disordered region. Over residues 341 to 352 (HTHTSNDTNLQS) the composition is skewed to polar residues.

The protein belongs to the ferredoxin--NADP reductase type 2 family. Homodimer. Requires FAD as cofactor.

It carries out the reaction 2 reduced [2Fe-2S]-[ferredoxin] + NADP(+) + H(+) = 2 oxidized [2Fe-2S]-[ferredoxin] + NADPH. The polypeptide is Ferredoxin--NADP reductase (Ralstonia nicotianae (strain ATCC BAA-1114 / GMI1000) (Ralstonia solanacearum)).